A 793-amino-acid chain; its full sequence is uncharacterized protein (793 aa).

The signal sequence occupies residues 1–21; the sequence is MLKKTLLAYTIGFAFSPPANA. C769 and C792 form a disulfide bridge.

Belongs to the fimbrial export usher family.

The protein localises to the cell outer membrane. Functionally, involved in the export and assembly of a fimbrial subunit across the outer membrane. This is an uncharacterized protein from Escherichia coli (strain K12).